The sequence spans 248 residues: Tryptophan synthase alpha chain (248 aa).

Residues Glu-36 and Asp-47 each act as proton acceptor in the active site.

This sequence belongs to the TrpA family. Tetramer of two alpha and two beta chains.

It catalyses the reaction (1S,2R)-1-C-(indol-3-yl)glycerol 3-phosphate + L-serine = D-glyceraldehyde 3-phosphate + L-tryptophan + H2O. Its pathway is amino-acid biosynthesis; L-tryptophan biosynthesis; L-tryptophan from chorismate: step 5/5. Functionally, the alpha subunit is responsible for the aldol cleavage of indoleglycerol phosphate to indole and glyceraldehyde 3-phosphate. The polypeptide is Tryptophan synthase alpha chain (Archaeoglobus fulgidus (strain ATCC 49558 / DSM 4304 / JCM 9628 / NBRC 100126 / VC-16)).